The chain runs to 196 residues: Large ribosomal subunit protein eL15 (196 aa).

The segment at arginine 162–lysine 196 is disordered.

This sequence belongs to the eukaryotic ribosomal protein eL15 family.

The polypeptide is Large ribosomal subunit protein eL15 (Haloquadratum walsbyi (strain DSM 16790 / HBSQ001)).